A 340-amino-acid polypeptide reads, in one-letter code: Ketol-acid reductoisomerase (NADP(+)) (340 aa).

In terms of domain architecture, KARI N-terminal Rossmann spans 5-182 (MEYEKDVKVA…GSARVGLLET (178 aa)). Residues 26-29 (YGSQ), Arg-49, Ser-53, and 83-86 (DEIQ) each bind NADP(+). Residue His-108 is part of the active site. Position 134 (Gly-134) interacts with NADP(+). Residues 183-328 (TYKEETEEDL…AELRKAMPFV (146 aa)) enclose the KARI C-terminal knotted domain. 4 residues coordinate Mg(2+): Asp-191, Glu-195, Glu-227, and Glu-231. Position 252 (Ser-252) interacts with substrate.

It belongs to the ketol-acid reductoisomerase family. The cofactor is Mg(2+).

The enzyme catalyses (2R)-2,3-dihydroxy-3-methylbutanoate + NADP(+) = (2S)-2-acetolactate + NADPH + H(+). It carries out the reaction (2R,3R)-2,3-dihydroxy-3-methylpentanoate + NADP(+) = (S)-2-ethyl-2-hydroxy-3-oxobutanoate + NADPH + H(+). The protein operates within amino-acid biosynthesis; L-isoleucine biosynthesis; L-isoleucine from 2-oxobutanoate: step 2/4. Its pathway is amino-acid biosynthesis; L-valine biosynthesis; L-valine from pyruvate: step 2/4. Functionally, involved in the biosynthesis of branched-chain amino acids (BCAA). Catalyzes an alkyl-migration followed by a ketol-acid reduction of (S)-2-acetolactate (S2AL) to yield (R)-2,3-dihydroxy-isovalerate. In the isomerase reaction, S2AL is rearranged via a Mg-dependent methyl migration to produce 3-hydroxy-3-methyl-2-ketobutyrate (HMKB). In the reductase reaction, this 2-ketoacid undergoes a metal-dependent reduction by NADPH to yield (R)-2,3-dihydroxy-isovalerate. The sequence is that of Ketol-acid reductoisomerase (NADP(+)) from Streptococcus sanguinis (strain SK36).